A 190-amino-acid polypeptide reads, in one-letter code: Inner membrane-spanning protein YciB (190 aa).

The next 5 membrane-spanning stretches (helical) occupy residues 22–42, 50–70, 76–96, 118–138, and 148–168; these read IYVA…LTFA, MQLI…FLHD, WKVT…HAMG, INWA…YVAF, and FKVF…GFYI.

It belongs to the YciB family.

Its subcellular location is the cell inner membrane. Its function is as follows. Plays a role in cell envelope biogenesis, maintenance of cell envelope integrity and membrane homeostasis. The chain is Inner membrane-spanning protein YciB from Vibrio campbellii (strain ATCC BAA-1116).